We begin with the raw amino-acid sequence, 347 residues long: Large ribosomal subunit protein uL10 (347 aa).

The disordered stretch occupies residues 310–347; sequence ATVAAPAAEEEKKEEEPEEEEEDHAEEDGMAGLGALFG. Over residues 325 to 338 the composition is skewed to acidic residues; it reads EPEEEEEDHAEEDG.

This sequence belongs to the universal ribosomal protein uL10 family. As to quaternary structure, part of the 50S ribosomal subunit. Forms part of the ribosomal stalk which helps the ribosome interact with GTP-bound translation factors. Forms a heptameric L10(L12)2(L12)2(L12)2 complex, where L10 forms an elongated spine to which the L12 dimers bind in a sequential fashion.

In terms of biological role, forms part of the ribosomal stalk, playing a central role in the interaction of the ribosome with GTP-bound translation factors. The protein is Large ribosomal subunit protein uL10 of Methanosarcina mazei (strain ATCC BAA-159 / DSM 3647 / Goe1 / Go1 / JCM 11833 / OCM 88) (Methanosarcina frisia).